The primary structure comprises 234 residues: Leucyl/phenylalanyl-tRNA--protein transferase (234 aa).

The protein belongs to the L/F-transferase family.

It localises to the cytoplasm. The catalysed reaction is N-terminal L-lysyl-[protein] + L-leucyl-tRNA(Leu) = N-terminal L-leucyl-L-lysyl-[protein] + tRNA(Leu) + H(+). It catalyses the reaction N-terminal L-arginyl-[protein] + L-leucyl-tRNA(Leu) = N-terminal L-leucyl-L-arginyl-[protein] + tRNA(Leu) + H(+). It carries out the reaction L-phenylalanyl-tRNA(Phe) + an N-terminal L-alpha-aminoacyl-[protein] = an N-terminal L-phenylalanyl-L-alpha-aminoacyl-[protein] + tRNA(Phe). Functionally, functions in the N-end rule pathway of protein degradation where it conjugates Leu, Phe and, less efficiently, Met from aminoacyl-tRNAs to the N-termini of proteins containing an N-terminal arginine or lysine. The chain is Leucyl/phenylalanyl-tRNA--protein transferase from Nitratidesulfovibrio vulgaris (strain ATCC 29579 / DSM 644 / CCUG 34227 / NCIMB 8303 / VKM B-1760 / Hildenborough) (Desulfovibrio vulgaris).